Here is a 608-residue protein sequence, read N- to C-terminus: Threonine--tRNA ligase (608 aa).

The editing domain stretch occupies residues 1-143 (MRVLYIHAER…SFKPEEGRAD (143 aa)). Catalytic regions lie at residues 194–490 (PKYL…PRLP) and 195–490 (KYLE…PRLP). The Zn(2+) site is built by C287, H338, and H459.

This sequence belongs to the class-II aminoacyl-tRNA synthetase family. Homodimer. Zn(2+) serves as cofactor.

The protein localises to the cytoplasm. The enzyme catalyses tRNA(Thr) + L-threonine + ATP = L-threonyl-tRNA(Thr) + AMP + diphosphate + H(+). In terms of biological role, catalyzes the attachment of threonine to tRNA(Thr) in a two-step reaction: L-threonine is first activated by ATP to form Thr-AMP and then transferred to the acceptor end of tRNA(Thr). Also edits incorrectly charged L-seryl-tRNA(Thr). The protein is Threonine--tRNA ligase of Pyrobaculum aerophilum (strain ATCC 51768 / DSM 7523 / JCM 9630 / CIP 104966 / NBRC 100827 / IM2).